The primary structure comprises 202 residues: Tetranectin (202 aa).

Positions 1–21 are cleaved as a signal peptide; sequence MELWGPCVLLCLFSLLTQVTA. 3 disulfide bridges follow: Cys71-Cys81, Cys98-Cys197, and Cys173-Cys189. The 122-residue stretch at 77 to 198 folds into the C-type lectin domain; the sequence is VHMKCFLAFV…CRDKLPYVCQ (122 aa).

Homotrimer.

It is found in the secreted. Functionally, tetranectin binds to plasminogen and to isolated kringle 4. May be involved in the packaging of molecules destined for exocytosis. Plays a role in retinal function. This Bos taurus (Bovine) protein is Tetranectin (CLEC3B).